The following is a 321-amino-acid chain: Lipoyl synthase (321 aa).

7 residues coordinate [4Fe-4S] cluster: C68, C73, C79, C94, C98, C101, and S308. In terms of domain architecture, Radical SAM core spans 80–297 (FNHGTATFMI…KAEALAMGFT (218 aa)).

Belongs to the radical SAM superfamily. Lipoyl synthase family. Requires [4Fe-4S] cluster as cofactor.

The protein localises to the cytoplasm. The enzyme catalyses [[Fe-S] cluster scaffold protein carrying a second [4Fe-4S](2+) cluster] + N(6)-octanoyl-L-lysyl-[protein] + 2 oxidized [2Fe-2S]-[ferredoxin] + 2 S-adenosyl-L-methionine + 4 H(+) = [[Fe-S] cluster scaffold protein] + N(6)-[(R)-dihydrolipoyl]-L-lysyl-[protein] + 4 Fe(3+) + 2 hydrogen sulfide + 2 5'-deoxyadenosine + 2 L-methionine + 2 reduced [2Fe-2S]-[ferredoxin]. It functions in the pathway protein modification; protein lipoylation via endogenous pathway; protein N(6)-(lipoyl)lysine from octanoyl-[acyl-carrier-protein]: step 2/2. In terms of biological role, catalyzes the radical-mediated insertion of two sulfur atoms into the C-6 and C-8 positions of the octanoyl moiety bound to the lipoyl domains of lipoate-dependent enzymes, thereby converting the octanoylated domains into lipoylated derivatives. The chain is Lipoyl synthase from Salmonella typhi.